A 357-amino-acid chain; its full sequence is Protein RecA (357 aa).

71 to 78 serves as a coordination point for ATP; the sequence is GPESSGKT.

Belongs to the RecA family.

It localises to the cytoplasm. Its function is as follows. Can catalyze the hydrolysis of ATP in the presence of single-stranded DNA, the ATP-dependent uptake of single-stranded DNA by duplex DNA, and the ATP-dependent hybridization of homologous single-stranded DNAs. It interacts with LexA causing its activation and leading to its autocatalytic cleavage. This is Protein RecA from Ehrlichia ruminantium (strain Gardel).